The following is a 1038-amino-acid chain: Ras GTPase-activating protein 1 (1038 aa).

Residue M1 is modified to N-acetylmethionine. Over residues 1–16 (MMAAEAGSEEGGPATA) the composition is skewed to low complexity. 2 disordered regions span residues 1–24 (MMAAEAGSEEGGPATAGTGGAAAT) and 117–152 (ETLGPGGGFPPLPPPPLLPPLGSGLGTVDEGDSLDG). Positions 124–135 (GFPPLPPPPLLP) are enriched in pro residues. One can recognise an SH2 1 domain in the interval 172 to 263 (WYHGKLDRTI…LKGEKLLYPV (92 aa)). Positions 270–332 (EDRRRVRAIL…VEDLVEEVGR (63 aa)) constitute an SH3 domain. The region spanning 342–432 (WFHGKISKQE…VEGYYLKEPV (91 aa)) is the SH2 2 domain. The 104-residue stretch at 465–568 (NIVKKGYLLK…WMKGLQAFCS (104 aa)) folds into the PH domain. The region spanning 568–681 (SLRKSSPGTS…QKGHATDEWF (114 aa)) is the C2 domain. Y606 is subject to Phosphotyrosine. A Ras-GAP domain is found at 755–965 (KLESLLLCTL…HRMIMFLDEL (211 aa)). S822 is modified (phosphoserine).

As to quaternary structure, interacts with SQSTM1. Interacts with SPSB1; the interaction does not promote degradation. Interacts with CAV2 (tyrosine phosphorylated form). Directly interacts with NCK1. Interacts with PDGFRB (tyrosine phosphorylated). Interacts (via SH2 domain) with the 'Tyr-9' phosphorylated form of PDPK1. Interacts with tyrosine-phosphorylated EPHB4. In terms of processing, phosphorylated by SRC and LCK. The phosphorylation SRC inhibits its ability to stimulate the Ras-GTPase activity, whereas phosphorylation by LCK does not display any effect on stimulation activity.

It is found in the cytoplasm. In terms of biological role, inhibitory regulator of the Ras-cyclic AMP pathway. Stimulates the GTPase of normal but not oncogenic Ras p21. The sequence is that of Ras GTPase-activating protein 1 (Rasa1) from Rattus norvegicus (Rat).